Consider the following 316-residue polypeptide: Glutamyl-Q tRNA(Asp) synthetase (316 aa).

Residues 13–17 and D49 contribute to the L-glutamate site; that span reads RFAPS. The short motif at 16–26 is the 'HIGH' region element; that stretch reads PSPSGDLHFGS. Zn(2+)-binding residues include C105, C107, Y119, and C123. Y176 and R194 together coordinate L-glutamate. Residues 232–236 carry the 'KMSKS' region motif; that stretch reads KLSKQ. K235 is a binding site for ATP.

It belongs to the class-I aminoacyl-tRNA synthetase family. GluQ subfamily. Zn(2+) is required as a cofactor.

Its function is as follows. Catalyzes the tRNA-independent activation of glutamate in presence of ATP and the subsequent transfer of glutamate onto a tRNA(Asp). Glutamate is transferred on the 2-amino-5-(4,5-dihydroxy-2-cyclopenten-1-yl) moiety of the queuosine in the wobble position of the QUC anticodon. This is Glutamyl-Q tRNA(Asp) synthetase from Photorhabdus laumondii subsp. laumondii (strain DSM 15139 / CIP 105565 / TT01) (Photorhabdus luminescens subsp. laumondii).